A 365-amino-acid polypeptide reads, in one-letter code: Protein YIM1 (365 aa).

This sequence belongs to the YIM1 family.

The protein localises to the lipid droplet. Its subcellular location is the mitochondrion. This is Protein YIM1 (YIM1) from Saccharomyces cerevisiae (strain ATCC 204508 / S288c) (Baker's yeast).